The primary structure comprises 449 residues: Na(+)/H(+) antiporter NhaA 1 (449 aa).

Transmembrane regions (helical) follow at residues Ile32–Asn52, Gly87–Gly107, Met114–Leu134, Gly145–Gly165, Val174–Gly194, Thr202–Val222, Ala233–Leu253, Trp318–Ile338, Leu347–Leu367, Trp382–Ile402, and Leu417–Phe437.

The protein belongs to the NhaA Na(+)/H(+) (TC 2.A.33) antiporter family.

It localises to the cell inner membrane. It carries out the reaction Na(+)(in) + 2 H(+)(out) = Na(+)(out) + 2 H(+)(in). Na(+)/H(+) antiporter that extrudes sodium in exchange for external protons. In Acidiphilium cryptum (strain JF-5), this protein is Na(+)/H(+) antiporter NhaA 1.